Consider the following 489-residue polypeptide: Alpha-amylase (489 aa).

The signal sequence occupies residues 1 to 16 (HFKPILVLCLATLALG). Residues Cys44 and Cys102 are joined by a disulfide bond. Positions 116, 164, and 173 each coordinate Ca(2+). Cys152 and Cys166 form a disulfide bridge. Arg201 is a binding site for chloride. Asp203 serves as the catalytic Nucleophile. His207 is a binding site for Ca(2+). The active-site Proton donor is the Glu240. Asn303 and Arg339 together coordinate chloride. 2 disulfides stabilise this stretch: Cys372–Cys378 and Cys443–Cys455.

The protein belongs to the glycosyl hydrolase 13 family. In terms of assembly, monomer. Ca(2+) is required as a cofactor. It depends on chloride as a cofactor.

It catalyses the reaction Endohydrolysis of (1-&gt;4)-alpha-D-glucosidic linkages in polysaccharides containing three or more (1-&gt;4)-alpha-linked D-glucose units.. The protein is Alpha-amylase of Tribolium castaneum (Red flour beetle).